The primary structure comprises 304 residues: MSTSHCRFYENKYPEIDDIVMVNVQQIAEMGAYVKLLEYDNIEGMILLSELSRRRIRSIQKLIRVGKNDVAVVLRVDKEKGYIDLSKRRVSSEDIIKCEEKYQKSKTVHSILRYCAEKFQIPLEELYKTIAWPLSRKFGHAYEAFKLSIIDETVWEGIEPPSKDVLDELKNYISKRLTPQAVKIRADVEVSCFSYEGIDAIKDALKSAEDMSTEQMQVKVKLVAAPLYVLTTQALDKQKGIEQLESAIEKITEVITKYGGVCNITMPPKAVTATEDAELQALLESKELDNRSDSEDDEDESDDE.

Residues 17–88 (DDIVMVNVQQ…EKGYIDLSKR (72 aa)) form the S1 motif domain. Ser52 carries the phosphoserine; by GCN2 modification. A disordered region spans residues 283–304 (LESKELDNRSDSEDDEDESDDE). The span at 284–293 (ESKELDNRSD) shows a compositional bias: basic and acidic residues. Residues Ser292 and Ser294 each carry the phosphoserine modification. The segment covering 294–304 (SEDDEDESDDE) has biased composition (acidic residues).

It belongs to the eIF-2-alpha family. As to quaternary structure, eukaryotic translation initiation factor 2 eIF2 is a heterotrimeric complex composed of an alpha, a beta and a gamma subunit. The factors eIF-1, eIF-2, eIF-3, TIF5/eIF-5 and methionyl-tRNAi form a multifactor complex (MFC) that may bind to the 40S ribosome. Interacts with CDC123; the interaction is direct. Interacts with GCD1. In terms of processing, phosphorylated; phosphorylation on Ser-52 by the GCN2 protein kinase occurs in response to low amino acid, carbon, or purine availability. Phosphorylation inhibits the guanine nucleotide exchange factor activity of the eIF2B complex.

Its subcellular location is the cytoplasm. The protein resides in the cytosol. Its function is as follows. eIF-2 functions in the early steps of protein synthesis by forming a ternary complex with GTP and initiator tRNA. This complex binds to a 40S ribosomal subunit, followed by mRNA binding to form a 43S pre-initiation complex. Junction of the 60S ribosomal subunit to form the 80S initiation complex is preceded by hydrolysis of the GTP bound to eIF-2 and release of an eIF-2-GDP binary complex. In order for eIF-2 to recycle and catalyze another round of initiation, the GDP bound to eIF-2 must exchange with GTP by way of a reaction catalyzed by eIF2B. The chain is Eukaryotic translation initiation factor 2 subunit alpha from Saccharomyces cerevisiae (strain ATCC 204508 / S288c) (Baker's yeast).